The sequence spans 459 residues: Asparagine--tRNA ligase (459 aa).

The protein belongs to the class-II aminoacyl-tRNA synthetase family. In terms of assembly, homodimer.

It is found in the cytoplasm. It carries out the reaction tRNA(Asn) + L-asparagine + ATP = L-asparaginyl-tRNA(Asn) + AMP + diphosphate + H(+). The chain is Asparagine--tRNA ligase from Pelobacter propionicus (strain DSM 2379 / NBRC 103807 / OttBd1).